Here is a 135-residue protein sequence, read N- to C-terminus: Small ribosomal subunit protein bS6 (135 aa).

Lys-93 bears the N6-acetyllysine mark. Positions 98–135 are disordered; that stretch reads EASPMVKAKDERRERRDDFANETADDAEAGDSEEEEEE. A compositionally biased stretch (basic and acidic residues) spans 104–116; that stretch reads KAKDERRERRDDF. Acidic residues predominate over residues 120–135; it reads TADDAEAGDSEEEEEE.

The protein belongs to the bacterial ribosomal protein bS6 family. Part of the 30S ribosomal subunit. Interacts weakly with uL2 in one of the 3.5 A resolved structures. Post-translationally, 5 different forms of the protein, varying only in the number of C-terminal glutamate residues, were isolated. The sequence shown is form bS6-6, which is the longest. The first two Glu are encoded by the rpsF gene, the other Glu are added post-translationally by the RimK enzyme.

Binds together with bS18 to 16S ribosomal RNA. The sequence is that of Small ribosomal subunit protein bS6 (rpsF) from Escherichia coli (strain K12).